A 1571-amino-acid chain; its full sequence is Pentafunctional AROM polypeptide 2 (1571 aa).

The 3-dehydroquinate synthase stretch occupies residues 1–380 (MAEPTKISIL…YEPKASVVSN (380 aa)). NAD(+) is bound by residues 44–46 (DTN), 81–84 (ENSK), 112–114 (GGV), and D117. R128 provides a ligand contact to 7-phospho-2-dehydro-3-deoxy-D-arabino-heptonate. 137–138 (TT) contributes to the NAD(+) binding site. Residues D144 and K150 each contribute to the 7-phospho-2-dehydro-3-deoxy-D-arabino-heptonate site. K159 serves as a coordination point for NAD(+). 7-phospho-2-dehydro-3-deoxy-D-arabino-heptonate is bound at residue N160. Residues 177–180 (FIDT) and N188 each bind NAD(+). Position 192 (E192) interacts with Zn(2+). Residues 192-195 (EVIK) and K246 contribute to the 7-phospho-2-dehydro-3-deoxy-D-arabino-heptonate site. E256 (proton acceptor; for 3-dehydroquinate synthase activity) is an active-site residue. 7-phospho-2-dehydro-3-deoxy-D-arabino-heptonate-binding positions include 260-264 (RNLLN) and H267. H267 contributes to the Zn(2+) binding site. The active-site Proton acceptor; for 3-dehydroquinate synthase activity is the H271. H283 and K352 together coordinate 7-phospho-2-dehydro-3-deoxy-D-arabino-heptonate. Zn(2+) is bound at residue H283. The tract at residues 393–838 (VIPGVPKNLN…WDALKQKFGV (446 aa)) is EPSP synthase. Residue C820 is the For EPSP synthase activity of the active site. Residues 859-1051 (NASIIIIGMR…RKKHLSFFVS (193 aa)) are shikimate kinase. Residue 866 to 873 (GMRGAGKT) coordinates ATP. The 3-dehydroquinase stretch occupies residues 1052 to 1273 (LTLPDLRESG…AAPGQLSAAE (222 aa)). H1175 (proton acceptor; for 3-dehydroquinate dehydratase activity) is an active-site residue. Residue K1203 is the Schiff-base intermediate with substrate; for 3-dehydroquinate dehydratase activity of the active site. The interval 1286–1571 (AKKFAVLGKP…NAVLGTNETK (286 aa)) is shikimate dehydrogenase.

In the N-terminal section; belongs to the sugar phosphate cyclases superfamily. Dehydroquinate synthase family. This sequence in the 2nd section; belongs to the EPSP synthase family. The protein in the 3rd section; belongs to the shikimate kinase family. It in the 4th section; belongs to the type-I 3-dehydroquinase family. In the C-terminal section; belongs to the shikimate dehydrogenase family. In terms of assembly, homodimer. It depends on Zn(2+) as a cofactor.

The protein localises to the cytoplasm. The enzyme catalyses 7-phospho-2-dehydro-3-deoxy-D-arabino-heptonate = 3-dehydroquinate + phosphate. It catalyses the reaction 3-dehydroquinate = 3-dehydroshikimate + H2O. The catalysed reaction is shikimate + NADP(+) = 3-dehydroshikimate + NADPH + H(+). It carries out the reaction shikimate + ATP = 3-phosphoshikimate + ADP + H(+). The enzyme catalyses 3-phosphoshikimate + phosphoenolpyruvate = 5-O-(1-carboxyvinyl)-3-phosphoshikimate + phosphate. It functions in the pathway metabolic intermediate biosynthesis; chorismate biosynthesis; chorismate from D-erythrose 4-phosphate and phosphoenolpyruvate: step 2/7. It participates in metabolic intermediate biosynthesis; chorismate biosynthesis; chorismate from D-erythrose 4-phosphate and phosphoenolpyruvate: step 3/7. The protein operates within metabolic intermediate biosynthesis; chorismate biosynthesis; chorismate from D-erythrose 4-phosphate and phosphoenolpyruvate: step 4/7. Its pathway is metabolic intermediate biosynthesis; chorismate biosynthesis; chorismate from D-erythrose 4-phosphate and phosphoenolpyruvate: step 5/7. It functions in the pathway metabolic intermediate biosynthesis; chorismate biosynthesis; chorismate from D-erythrose 4-phosphate and phosphoenolpyruvate: step 6/7. Functionally, the AROM polypeptide catalyzes 5 consecutive enzymatic reactions in prechorismate polyaromatic amino acid biosynthesis. In Talaromyces marneffei (strain ATCC 18224 / CBS 334.59 / QM 7333) (Penicillium marneffei), this protein is Pentafunctional AROM polypeptide 2.